The sequence spans 391 residues: MPRSDYLFTSESVSEGHPDKVSDRISDTVVDAYLAAMPEARLGVETLTTTNRVVIAGEVRGPDSVTFKDLEELTREAVRDIGYEQSGFHWKNNDVAIHLHAQSADIAQGVDAAGNKDEGAGDQGIMFGYAADETPALMPAPIFYAHKILKDLADARKAKQGDAAKLGPDAKSQVTVRYADGRPVEVTQIVLSTQHLDESLDSADVRAIVEPYILKALPQGWVNEGTVWHVNPTGKFVIGGPDGDAGLTGRKIIVDTYGGAAPHGGGAFSGKDPTKVDRSAAYAARYLAKNVVAAGLARRATIQLSYAIGVAKPLSIYVDLHGTGTVDEAKLEGVLMDALDLSPRGIRTALQLNKPIYARTSAYGHFGREPDADGGFSWEKTDLADKLKSAF.

Positions 1-20 (MPRSDYLFTSESVSEGHPDK) are disordered. His-17 contributes to the ATP binding site. Asp-19 serves as a coordination point for Mg(2+). Glu-45 serves as a coordination point for K(+). 2 residues coordinate L-methionine: Glu-58 and Gln-102. The flexible loop stretch occupies residues 102 to 112 (QSADIAQGVDA). ATP contacts are provided by residues 169–171 (DAK), 235–236 (KF), Asp-244, 250–251 (RK), Ala-267, and Lys-271. Position 244 (Asp-244) interacts with L-methionine. Residue Lys-275 coordinates L-methionine.

Belongs to the AdoMet synthase family. Homotetramer; dimer of dimers. The cofactor is Mg(2+). K(+) serves as cofactor.

Its subcellular location is the cytoplasm. It carries out the reaction L-methionine + ATP + H2O = S-adenosyl-L-methionine + phosphate + diphosphate. It participates in amino-acid biosynthesis; S-adenosyl-L-methionine biosynthesis; S-adenosyl-L-methionine from L-methionine: step 1/1. Functionally, catalyzes the formation of S-adenosylmethionine (AdoMet) from methionine and ATP. The overall synthetic reaction is composed of two sequential steps, AdoMet formation and the subsequent tripolyphosphate hydrolysis which occurs prior to release of AdoMet from the enzyme. The chain is S-adenosylmethionine synthase from Methylorubrum populi (strain ATCC BAA-705 / NCIMB 13946 / BJ001) (Methylobacterium populi).